The primary structure comprises 447 residues: Phosphatidylinositol 4-kinase type 2-alpha (447 aa).

Positions 1-77 are disordered; the sequence is MDETSPLVSP…HRNEFPEDPE (77 aa). The segment covering 48-77 has biased composition (basic and acidic residues); it reads RSRERQPLLDRDRGASPRDPHRNEFPEDPE. In terms of domain architecture, PI3K/PI4K catalytic spans 92-421; sequence GIYPERIYQG…VQMPPVIVET (330 aa). A G-loop region spans residues 98–104; the sequence is IYQGSSG. Residues 99–105 and lysine 120 each bind ATP; that span reads YQGSSGS. Residues 125–127 form an important for substrate binding region; the sequence is EPY. Residues 133 to 146 are important for interaction with membranes; the sequence is KWTKWLQKLCCPCC. S-palmitoyl cysteine attachment occurs at residues cysteine 142, cysteine 143, cysteine 145, and cysteine 146. ATP is bound at residue 229-232; the sequence is QIFV. The segment at 236–244 is important for interaction with membranes; the sequence is KDADFWLRR. Residues 273-281 are catalytic loop; it reads RNTDRGNDN. The segment at 312–332 is activation loop; sequence AIDNGLAFPLKHPDSWRAYPF. Aspartate 314 is an ATP binding site. The tract at residues 327–336 is important for interaction with membranes; that stretch reads WRAYPFYWAW.

Belongs to the PI3/PI4-kinase family. Type II PI4K subfamily.

It is found in the golgi apparatus. It localises to the trans-Golgi network membrane. The protein localises to the membrane raft. The protein resides in the endosome. Its subcellular location is the cytoplasmic vesicle. It is found in the cell projection. It localises to the dendrite. The protein localises to the presynaptic cell membrane. The protein resides in the synapse. Its subcellular location is the synaptosome. It is found in the mitochondrion. It localises to the membrane. The protein localises to the cell membrane. The protein resides in the perikaryon. Its subcellular location is the neuron projection. The enzyme catalyses a 1,2-diacyl-sn-glycero-3-phospho-(1D-myo-inositol) + ATP = a 1,2-diacyl-sn-glycero-3-phospho-(1D-myo-inositol 4-phosphate) + ADP + H(+). Functionally, membrane-bound phosphatidylinositol-4 kinase (PI4-kinase) that catalyzes the phosphorylation of phosphatidylinositol (PI) to phosphatidylinositol 4-phosphate (PI4P), a lipid that plays important roles in endocytosis, Golgi function, protein sorting and membrane trafficking. Besides, phosphorylation of phosphatidylinositol (PI) to phosphatidylinositol 4-phosphate (PI4P) is the first committed step in the generation of phosphatidylinositol 4,5-bisphosphate (PIP2), a precursor of the second messenger inositol 1,4,5-trisphosphate (InsP3). The protein is Phosphatidylinositol 4-kinase type 2-alpha (pi4k2a) of Danio rerio (Zebrafish).